Reading from the N-terminus, the 249-residue chain is Sec-independent protein translocase protein TatC (249 aa).

Transmembrane regions (helical) follow at residues 18–38 (VSVG…KNIF), 69–89 (AIVI…APGL), 96–116 (VILP…AFSY), 151–171 (LILG…LAKV), 187–207 (IVVI…SQIF), and 208–228 (MALP…MVNP).

It belongs to the TatC family. As to quaternary structure, the Tat system comprises two distinct complexes: a TatABC complex, containing multiple copies of TatA, TatB and TatC subunits, and a separate TatA complex, containing only TatA subunits. Substrates initially bind to the TatABC complex, which probably triggers association of the separate TatA complex to form the active translocon.

The protein localises to the cell inner membrane. In terms of biological role, part of the twin-arginine translocation (Tat) system that transports large folded proteins containing a characteristic twin-arginine motif in their signal peptide across membranes. Together with TatB, TatC is part of a receptor directly interacting with Tat signal peptides. The sequence is that of Sec-independent protein translocase protein TatC from Helicobacter pylori (strain J99 / ATCC 700824) (Campylobacter pylori J99).